The following is a 339-amino-acid chain: Phenylalanine--tRNA ligase alpha subunit (339 aa).

Glu-254 provides a ligand contact to Mg(2+).

This sequence belongs to the class-II aminoacyl-tRNA synthetase family. Phe-tRNA synthetase alpha subunit type 1 subfamily. Tetramer of two alpha and two beta subunits. It depends on Mg(2+) as a cofactor.

The protein localises to the cytoplasm. It carries out the reaction tRNA(Phe) + L-phenylalanine + ATP = L-phenylalanyl-tRNA(Phe) + AMP + diphosphate + H(+). The sequence is that of Phenylalanine--tRNA ligase alpha subunit from Clostridium botulinum (strain ATCC 19397 / Type A).